Consider the following 797-residue polypeptide: RAS guanyl-releasing protein 1 (797 aa).

Over residues 1–12 (MGTLGKAREAPR) the composition is skewed to basic and acidic residues. Residues 1 to 23 (MGTLGKAREAPRKPSHGCRAASK) form a disordered region. An N-terminal Ras-GEF domain is found at 53–176 (LGHLAKGASL…RLIDTTQINA (124 aa)). The tract at residues 57–110 (AKGASLDDLIDSCIQSFDADGNLCRSNQLLQVMLTMHRIVISSAELLQKVITLY) is ras exchanger motif region; required for transforming activity. Residue Thr184 is modified to Phosphothreonine; by PKC. In terms of domain architecture, Ras-GEF spans 205 to 436 (EPEELSEHLT…YELSYAREPR (232 aa)). EF-hand domains are found at residues 470–505 (HVQR…FPFS) and 506–532 (FCVM…ASSI). The Ca(2+) site is built by Asp483, Asp485, Asp487, Tyr489, and Glu494. A Phorbol-ester/DAG-type zinc finger spans residues 541 to 591 (PHNFQETTYLKPTFCDNCAGFLWGVIKQGYRCKDCGMNCHKQCKDLVVFEC). The interval 673–694 (TQTESQPWIGSEGPSGPFVLSS) is disordered. Positions 686–694 (PSGPFVLSS) are suppress the PT region-mediated translocation to plasma membrane. The segment at 718–797 (LVRKRAFVKW…LAQMEQGDCS (80 aa)) is PT region; mediates the BCR-dependent translocation to plasma membrane. The stretch at 746 to 786 (PTYQELEQEINTLKADNDALKIQLKYAQKKIESLQLEKSNH) forms a coiled coil.

The protein belongs to the RASGRP family. Homodimer. Forms a signaling complex with DGKZ and HRAS. Interacts with F-actin. Interacts with SKAP1. As to expression, expressed in brain with higher expression in cerebellum, cerebral cortex and amygdala. Expressed in the hematopoietic system. Expressed in T-cells (at protein level). Expressed in NK cells (at protein level).

Its subcellular location is the cytoplasm. It localises to the cytosol. The protein resides in the cell membrane. It is found in the golgi apparatus membrane. The protein localises to the endoplasmic reticulum membrane. With respect to regulation, autoinhibited. Activated by diacylglycerol and calcium binding, which induces a conformational change releasing the autoinhibitory state. Regulated by DGKA. Regulated by DGKZ. Regulated by PLC gamma and F-actin polymerization. Functionally, functions as a calcium- and diacylglycerol (DAG)-regulated nucleotide exchange factor specifically activating Ras through the exchange of bound GDP for GTP. Activates the Erk/MAP kinase cascade. Regulates T-cell/B-cell development, homeostasis and differentiation by coupling T-lymphocyte/B-lymphocyte antigen receptors to Ras. Regulates NK cell cytotoxicity and ITAM-dependent cytokine production by activation of Ras-mediated ERK and JNK pathways. Functions in mast cell degranulation and cytokine secretion, regulating FcERI-evoked allergic responses. May also function in differentiation of other cell types. This Homo sapiens (Human) protein is RAS guanyl-releasing protein 1 (RASGRP1).